We begin with the raw amino-acid sequence, 86 residues long: Small ribosomal subunit protein eS21 (86 aa).

It belongs to the eukaryotic ribosomal protein eS21 family. Component of the 40S small ribosomal subunit.

It is found in the cytoplasm. The protein resides in the cytosol. The protein localises to the rough endoplasmic reticulum. This is Small ribosomal subunit protein eS21 (RPS21) from Suberites domuncula (Sponge).